The chain runs to 420 residues: Serine--tRNA ligase (420 aa).

229 to 231 is a binding site for L-serine; it reads TAE. 260 to 262 is an ATP binding site; it reads RSE. Glu-283 contributes to the L-serine binding site. 347-350 serves as a coordination point for ATP; the sequence is EISS. Ser-381 provides a ligand contact to L-serine.

Belongs to the class-II aminoacyl-tRNA synthetase family. Type-1 seryl-tRNA synthetase subfamily. As to quaternary structure, homodimer. The tRNA molecule binds across the dimer.

The protein resides in the cytoplasm. The catalysed reaction is tRNA(Ser) + L-serine + ATP = L-seryl-tRNA(Ser) + AMP + diphosphate + H(+). It catalyses the reaction tRNA(Sec) + L-serine + ATP = L-seryl-tRNA(Sec) + AMP + diphosphate + H(+). It participates in aminoacyl-tRNA biosynthesis; selenocysteinyl-tRNA(Sec) biosynthesis; L-seryl-tRNA(Sec) from L-serine and tRNA(Sec): step 1/1. Functionally, catalyzes the attachment of serine to tRNA(Ser). Is also able to aminoacylate tRNA(Sec) with serine, to form the misacylated tRNA L-seryl-tRNA(Sec), which will be further converted into selenocysteinyl-tRNA(Sec). The protein is Serine--tRNA ligase of Gluconobacter oxydans (strain 621H) (Gluconobacter suboxydans).